The following is a 178-amino-acid chain: UPF0215 protein STK_03040 (178 aa).

The protein belongs to the UPF0215 family.

The sequence is that of UPF0215 protein STK_03040 from Sulfurisphaera tokodaii (strain DSM 16993 / JCM 10545 / NBRC 100140 / 7) (Sulfolobus tokodaii).